The primary structure comprises 297 residues: uncharacterized protein (297 aa).

Helical transmembrane passes span 14–34 (LFLM…FLKF), 55–75 (LLLG…IYFF), 81–101 (FYFG…AGAL), 110–130 (AIIL…RVAF), 135–155 (LSTL…KLLF), 163–183 (IVGA…YGSI), and 208–228 (LIMT…SKCF).

It is found in the cell membrane. This is an uncharacterized protein from Methanocaldococcus jannaschii (strain ATCC 43067 / DSM 2661 / JAL-1 / JCM 10045 / NBRC 100440) (Methanococcus jannaschii).